A 99-amino-acid polypeptide reads, in one-letter code: Aspartyl/glutamyl-tRNA(Asn/Gln) amidotransferase subunit C (99 aa).

The protein belongs to the GatC family. As to quaternary structure, heterotrimer of A, B and C subunits.

It catalyses the reaction L-glutamyl-tRNA(Gln) + L-glutamine + ATP + H2O = L-glutaminyl-tRNA(Gln) + L-glutamate + ADP + phosphate + H(+). It carries out the reaction L-aspartyl-tRNA(Asn) + L-glutamine + ATP + H2O = L-asparaginyl-tRNA(Asn) + L-glutamate + ADP + phosphate + 2 H(+). In terms of biological role, allows the formation of correctly charged Asn-tRNA(Asn) or Gln-tRNA(Gln) through the transamidation of misacylated Asp-tRNA(Asn) or Glu-tRNA(Gln) in organisms which lack either or both of asparaginyl-tRNA or glutaminyl-tRNA synthetases. The reaction takes place in the presence of glutamine and ATP through an activated phospho-Asp-tRNA(Asn) or phospho-Glu-tRNA(Gln). The sequence is that of Aspartyl/glutamyl-tRNA(Asn/Gln) amidotransferase subunit C from Rhodococcus erythropolis (strain PR4 / NBRC 100887).